The primary structure comprises 98 residues: Aspartyl/glutamyl-tRNA(Asn/Gln) amidotransferase subunit C (98 aa).

This sequence belongs to the GatC family. In terms of assembly, heterotrimer of A, B and C subunits.

The enzyme catalyses L-glutamyl-tRNA(Gln) + L-glutamine + ATP + H2O = L-glutaminyl-tRNA(Gln) + L-glutamate + ADP + phosphate + H(+). It carries out the reaction L-aspartyl-tRNA(Asn) + L-glutamine + ATP + H2O = L-asparaginyl-tRNA(Asn) + L-glutamate + ADP + phosphate + 2 H(+). Functionally, allows the formation of correctly charged Asn-tRNA(Asn) or Gln-tRNA(Gln) through the transamidation of misacylated Asp-tRNA(Asn) or Glu-tRNA(Gln) in organisms which lack either or both of asparaginyl-tRNA or glutaminyl-tRNA synthetases. The reaction takes place in the presence of glutamine and ATP through an activated phospho-Asp-tRNA(Asn) or phospho-Glu-tRNA(Gln). In Kocuria rhizophila (strain ATCC 9341 / DSM 348 / NBRC 103217 / DC2201), this protein is Aspartyl/glutamyl-tRNA(Asn/Gln) amidotransferase subunit C.